The following is a 400-amino-acid chain: 3-phenylpropionate/cinnamic acid dioxygenase ferredoxin--NAD(+) reductase component (400 aa).

Thr5–Asp36 contacts FAD. Position 146–174 (Ser146–Glu174) interacts with NAD(+).

The protein belongs to the bacterial ring-hydroxylating dioxygenase ferredoxin reductase family. This dioxygenase system consists of four proteins: the two subunits of the hydroxylase component (HcaE and HcaF), a ferredoxin (HcaC) and a ferredoxin reductase (HcaD). Requires FAD as cofactor.

It catalyses the reaction 2 reduced [2Fe-2S]-[ferredoxin] + NAD(+) + H(+) = 2 oxidized [2Fe-2S]-[ferredoxin] + NADH. Its pathway is aromatic compound metabolism; 3-phenylpropanoate degradation. Functionally, part of the multicomponent 3-phenylpropionate dioxygenase, that converts 3-phenylpropionic acid (PP) and cinnamic acid (CI) into 3-phenylpropionate-dihydrodiol (PP-dihydrodiol) and cinnamic acid-dihydrodiol (CI-dihydrodiol), respectively. The protein is 3-phenylpropionate/cinnamic acid dioxygenase ferredoxin--NAD(+) reductase component of Escherichia coli O17:K52:H18 (strain UMN026 / ExPEC).